A 704-amino-acid polypeptide reads, in one-letter code: Elongation factor G (704 aa).

The region spanning 10–290 (NKVRNIGIMA…AVVDFLPSPL (281 aa)) is the tr-type G domain. GTP is bound by residues 19-26 (AHIDAGKT), 83-87 (DTPGH), and 137-140 (NKMD). Positions 293–313 (PPMIGHDPRNEETEMTRKPST) are disordered. A compositionally biased stretch (basic and acidic residues) spans 298-313 (HDPRNEETEMTRKPST).

This sequence belongs to the TRAFAC class translation factor GTPase superfamily. Classic translation factor GTPase family. EF-G/EF-2 subfamily.

The protein resides in the cytoplasm. Functionally, catalyzes the GTP-dependent ribosomal translocation step during translation elongation. During this step, the ribosome changes from the pre-translocational (PRE) to the post-translocational (POST) state as the newly formed A-site-bound peptidyl-tRNA and P-site-bound deacylated tRNA move to the P and E sites, respectively. Catalyzes the coordinated movement of the two tRNA molecules, the mRNA and conformational changes in the ribosome. In Renibacterium salmoninarum (strain ATCC 33209 / DSM 20767 / JCM 11484 / NBRC 15589 / NCIMB 2235), this protein is Elongation factor G.